Consider the following 252-residue polypeptide: C-type lectin domain family 2 member D3 (252 aa).

The tract at residues 1-58 is disordered; sequence MSSSAHLQDAPPLLSGTLTQNEGQTSLRQSSSCGPSAASASESLSGYTESRIPHSKVR. The Cytoplasmic segment spans residues 1–78; sequence MSSSAHLQDA…ESRVKRYCCY (78 aa). Polar residues predominate over residues 16–29; it reads GTLTQNEGQTSLRQ. Positions 30–43 are enriched in low complexity; that stretch reads SSSCGPSAASASES. The helical; Signal-anchor for type II membrane protein transmembrane segment at 79–99 threads the bilayer; that stretch reads GGVITVVAIAIVVPLSVTLSV. The Extracellular portion of the chain corresponds to 100–252; that stretch reads KQMEQTSINN…KPKKYISQSQ (153 aa). A C-type lectin domain is found at 137–242; sequence YGNKCFYFSE…VYVERPWICS (106 aa). Asn-150 carries N-linked (GlcNAc...) asparagine glycosylation. Cys-158 and Cys-241 are disulfide-bonded.

The protein localises to the cell membrane. Lectin-type cell surface receptor. This chain is C-type lectin domain family 2 member D3 (Clec2d3), found in Rattus norvegicus (Rat).